Consider the following 477-residue polypeptide: Protoporphyrinogen oxidase (477 aa).

FAD-binding positions include 9–14 (GGGISG), tryptophan 42, 57–60 (GPRG), valine 257, alanine 449, and 454–456 (VAV).

It belongs to the protoporphyrinogen/coproporphyrinogen oxidase family. Protoporphyrinogen oxidase subfamily. As to quaternary structure, monomer. Homodimer. The cofactor is FAD.

It localises to the mitochondrion inner membrane. The enzyme catalyses protoporphyrinogen IX + 3 O2 = protoporphyrin IX + 3 H2O2. It participates in porphyrin-containing compound metabolism; protoporphyrin-IX biosynthesis; protoporphyrin-IX from protoporphyrinogen-IX: step 1/1. In terms of biological role, catalyzes the 6-electron oxidation of protoporphyrinogen-IX to form protoporphyrin-IX. The sequence is that of Protoporphyrinogen oxidase (PPOX) from Macaca fascicularis (Crab-eating macaque).